The primary structure comprises 1001 residues: RNA-binding protein 12B (1001 aa).

A phosphoserine mark is found at serine 98, serine 101, and serine 112. A Glycyl lysine isopeptide (Lys-Gly) (interchain with G-Cter in SUMO2) cross-link involves residue lysine 114. Residues 119–128 (NSGYGSSINQ) are compositionally biased toward polar residues. Residues 119 to 147 (NSGYGSSINQDAGFHTNGTGHGNLRPRKT) are disordered. Lysine 151 is covalently cross-linked (Glycyl lysine isopeptide (Lys-Gly) (interchain with G-Cter in SUMO2)). The 76-residue stretch at 155–230 (PYLFLRGLPY…RFIEVMQGSE (76 aa)) folds into the RRM 1 domain. A compositionally biased stretch (basic and acidic residues) spans 247 to 262 (LRRSEEHSPPRGINDR). The disordered stretch occupies residues 247-278 (LRRSEEHSPPRGINDRHFRKRSHSKSPRRTRS). A phosphoserine mark is found at serine 250 and serine 254. Residues 263–278 (HFRKRSHSKSPRRTRS) show a composition bias toward basic residues. Threonine 276 is modified (phosphothreonine). Phosphoserine occurs at positions 278, 280, 292, and 294. The RRM 2 domain occupies 284–360 (FYVHLKNLSL…RPVHIDPISR (77 aa)). Lysine 319 bears the N6-acetyllysine mark. A Glycyl lysine isopeptide (Lys-Gly) (interchain with G-Cter in SUMO2) cross-link involves residue lysine 335. Serine 377 bears the Phosphoserine mark. The 78-residue stretch at 400-477 (LCIYIRNFPF…TEVLLRLISE (78 aa)) folds into the RRM 3 domain. Glycyl lysine isopeptide (Lys-Gly) (interchain with G-Cter in SUMO2) cross-links involve residues lysine 514 and lysine 541. The interval 544 to 587 (QRDFRQPDRHPPEDFRHSSEDFRFPPEDFRHSPEDFRRPREEDF) is disordered. Phosphoserine is present on residues serine 575, serine 591, and serine 638. Positions 631-881 (LEEDFRRSPT…FRSPPDDFRS (251 aa)) are enriched in basic and acidic residues. Positions 631–882 (LEEDFRRSPT…RSPPDDFRSH (252 aa)) are disordered. A Phosphothreonine modification is found at threonine 640. Phosphoserine is present on residues serine 710 and serine 718. A Glycyl lysine isopeptide (Lys-Gly) (interchain with G-Cter in SUMO2) cross-link involves residue lysine 895. The region spanning 925-1001 (TPIKIMNLPF…GPRKVKLTLL (77 aa)) is the RRM 4 domain.

The chain is RNA-binding protein 12B (RBM12B) from Homo sapiens (Human).